A 112-amino-acid polypeptide reads, in one-letter code: Cornifelin homolog (112 aa).

This sequence belongs to the cornifelin family.

This Danio rerio (Zebrafish) protein is Cornifelin homolog (cnfn).